The following is a 330-amino-acid chain: tRNA uridine(34) hydroxylase (330 aa).

The Rhodanese domain occupies 123-217; that stretch reads SDPETILVDT…YLEEVPKEES (95 aa). Cysteine 177 (cysteine persulfide intermediate) is an active-site residue. The tract at residues 310–330 is disordered; sequence LNKQQKQQAKEIARKKAKSEI. Over residues 317 to 330 the composition is skewed to basic and acidic residues; it reads QAKEIARKKAKSEI.

This sequence belongs to the TrhO family.

The enzyme catalyses uridine(34) in tRNA + AH2 + O2 = 5-hydroxyuridine(34) in tRNA + A + H2O. Catalyzes oxygen-dependent 5-hydroxyuridine (ho5U) modification at position 34 in tRNAs. The sequence is that of tRNA uridine(34) hydroxylase from Francisella philomiragia subsp. philomiragia (strain ATCC 25017 / CCUG 19701 / FSC 153 / O#319-036).